A 79-amino-acid chain; its full sequence is uncharacterized protein (79 aa).

The N-terminal stretch at 1–18 (MQIKNIVAVLATVTAINA) is a signal peptide. The interval 24–44 (PNATTPNATQPNATQPNTTLP) is disordered. 4 N-linked (GlcNAc...) asparagine glycosylation sites follow: Asn25, Asn30, Asn35, and Asn40. The GPI-anchor amidated glycine moiety is linked to residue Gly55. Positions 56–79 (EAVVNTMAAGAFGAAIAAGVAFLF) are cleaved as a propeptide — removed in mature form.

It localises to the cell membrane. This is an uncharacterized protein from Saccharomyces cerevisiae (strain ATCC 204508 / S288c) (Baker's yeast).